A 183-amino-acid chain; its full sequence is Gamma-crystallin N (183 aa).

Beta/gamma crystallin 'Greek key' domains are found at residues 6 to 46 (GKIT…RVES), 47 to 89 (GAWV…RPVG), 95 to 136 (FRID…KVYG), and 138 to 180 (GAWV…RRVL).

The protein belongs to the beta/gamma-crystallin family. As to quaternary structure, monomer. Primordially eye-specific. Present in lens nucleus. In the retina, expression in observed in the outer plexiform layer (containing photoreceptors axons and synapses) and photoreceptor outer segments (at protein level). Also detected in the auditory hindbrain where it is highly expressed in the medial nucleus of the trapezoid body, but also present in other nuclei of the superior olivary complex.

Crystallins are the dominant structural components of the vertebrate eye lens. Also plays an important role for integrity and function of auditory nuclei. This is Gamma-crystallin N from Mus musculus (Mouse).